Consider the following 202-residue polypeptide: MNLVGGYQHHHHHHHHHHMLHEPFLFGPAARCHQERAYFPGWVLNPAEVTPELHGQSPAYGPAEFGSGGAGRLEALSGRLGRRKGVGGPKKERRRTESINSAFAELRECIPNVPADTKLSKIKTLRLATSYIAYLMEVLARDSQPGEPEGFKAELKKADGRENKRKRETQPEVYSQPLAHGEKKLKGRTGWPQQVWALELNP.

The bHLH domain maps to Arg83–Leu135. The interval Ser143–Gly187 is disordered. A compositionally biased stretch (basic and acidic residues) spans Glu149–Glu162.

As to quaternary structure, efficient DNA binding requires dimerization with another bHLH protein.

The protein resides in the nucleus. It is found in the nucleoplasm. The protein localises to the nucleolus. Its function is as follows. Transcription factor. Plays an essential role in cardiac morphogenesis. The chain is Heart- and neural crest derivatives-expressed protein 1 (HAND1) from Gallus gallus (Chicken).